A 249-amino-acid polypeptide reads, in one-letter code: Probable transcriptional regulatory protein DICTH_1505 (249 aa).

The protein belongs to the TACO1 family.

It is found in the cytoplasm. This chain is Probable transcriptional regulatory protein DICTH_1505, found in Dictyoglomus thermophilum (strain ATCC 35947 / DSM 3960 / H-6-12).